A 1131-amino-acid polypeptide reads, in one-letter code: DNA polymerase II large subunit (1131 aa).

Belongs to the archaeal DNA polymerase II family. In terms of assembly, heterodimer of a large subunit and a small subunit.

The catalysed reaction is DNA(n) + a 2'-deoxyribonucleoside 5'-triphosphate = DNA(n+1) + diphosphate. The enzyme catalyses Exonucleolytic cleavage in the 3'- to 5'-direction to yield nucleoside 5'-phosphates.. In terms of biological role, possesses two activities: a DNA synthesis (polymerase) and an exonucleolytic activity that degrades single-stranded DNA in the 3'- to 5'-direction. Has a template-primer preference which is characteristic of a replicative DNA polymerase. This Methanococcus vannielii (strain ATCC 35089 / DSM 1224 / JCM 13029 / OCM 148 / SB) protein is DNA polymerase II large subunit.